The primary structure comprises 37 residues: Large ribosomal subunit protein bL36c (37 aa).

The protein belongs to the bacterial ribosomal protein bL36 family.

The protein localises to the plastid. It is found in the chloroplast. The protein is Large ribosomal subunit protein bL36c of Cyanidioschyzon merolae (strain NIES-3377 / 10D) (Unicellular red alga).